We begin with the raw amino-acid sequence, 81 residues long: Putative membrane protein insertion efficiency factor (81 aa).

The tract at residues 61–81 is disordered; the sequence is NDGGFDPVPPAPSSRTSSIAE.

This sequence belongs to the UPF0161 family.

It is found in the cell inner membrane. Its function is as follows. Could be involved in insertion of integral membrane proteins into the membrane. In Pseudomonas putida (strain ATCC 700007 / DSM 6899 / JCM 31910 / BCRC 17059 / LMG 24140 / F1), this protein is Putative membrane protein insertion efficiency factor.